We begin with the raw amino-acid sequence, 304 residues long: Quinolinate synthase (304 aa).

Residues His-23 and Ser-40 each coordinate iminosuccinate. Position 86 (Cys-86) interacts with [4Fe-4S] cluster. Iminosuccinate-binding positions include 112-114 (YVN) and Ser-129. Residue Cys-173 participates in [4Fe-4S] cluster binding. Iminosuccinate is bound by residues 199–201 (HPE) and Thr-216. Cys-260 provides a ligand contact to [4Fe-4S] cluster.

It belongs to the quinolinate synthase family. Type 2 subfamily. The cofactor is [4Fe-4S] cluster.

It is found in the cytoplasm. It carries out the reaction iminosuccinate + dihydroxyacetone phosphate = quinolinate + phosphate + 2 H2O + H(+). It participates in cofactor biosynthesis; NAD(+) biosynthesis; quinolinate from iminoaspartate: step 1/1. Its function is as follows. Catalyzes the condensation of iminoaspartate with dihydroxyacetone phosphate to form quinolinate. This chain is Quinolinate synthase, found in Methanothermobacter thermautotrophicus (strain ATCC 29096 / DSM 1053 / JCM 10044 / NBRC 100330 / Delta H) (Methanobacterium thermoautotrophicum).